The primary structure comprises 426 residues: ATP-dependent Clp protease ATP-binding subunit ClpX (426 aa).

The ClpX-type ZB domain maps to 1-52 (MNEIKKRCSFCNKEESLDNPIINSGITPDVYICNYCLIVGSEILTGYLNKNP). C8, C11, C33, and C36 together coordinate Zn(2+). 129-136 (PTGSGKTL) is an ATP binding site.

The protein belongs to the ClpX chaperone family. In terms of assembly, component of the ClpX-ClpP complex. Forms a hexameric ring that, in the presence of ATP, binds to fourteen ClpP subunits assembled into a disk-like structure with a central cavity, resembling the structure of eukaryotic proteasomes.

Its function is as follows. ATP-dependent specificity component of the Clp protease. It directs the protease to specific substrates. Can perform chaperone functions in the absence of ClpP. This chain is ATP-dependent Clp protease ATP-binding subunit ClpX, found in Helicobacter hepaticus (strain ATCC 51449 / 3B1).